A 339-amino-acid polypeptide reads, in one-letter code: Transcription factor IIIA (339 aa).

9 C2H2-type zinc fingers span residues 13–37 (YICS…LCKH), 43–67 (FPCK…SITH), 73–98 (FKCD…NRFH), 105–129 (YVCH…QFTH), 135–159 (YKCP…EKVH), 162–188 (YPCK…KECH), 192–214 (VMCD…KKTH), 221–246 (YCCP…QSFH), and 252–276 (FACE…SVVH). 2 stretches are compositionally biased toward basic and acidic residues: residues 275–288 (VHDP…EKCP) and 305–316 (KSKEKSAAKATE). The segment at 275–339 (VHDPEKRKLK…ETKGSLVIEK (65 aa)) is disordered.

In terms of tissue distribution, synthesized in oocytes and, in much lower levels, in somatic cells.

It localises to the nucleus. In terms of biological role, involved in ribosomal large subunit biogenesis. Interacts with the internal control region (ICR) of approximately 50 bases within the 5S RNA genes, is required for correct transcription of these genes by RNA polymerase III. Also binds the transcribed 5S RNA's. In Xenopus borealis (Kenyan clawed frog), this protein is Transcription factor IIIA (gtf3a).